Reading from the N-terminus, the 146-residue chain is Negative cofactor 2 complex subunit beta (146 aa).

Residues 124–146 form a disordered region; it reads FRQSRSRLHHNSVSDPVKSEDSS. 3 positions are modified to phosphoserine: Ser-135, Ser-137, and Ser-142.

Component of the NC2 (negative cofactor 2) complex composed of BUR6 and NCB2. The NC2 complex associates with SPT15/TBP. Interacts with SPT15/TBP.

Its subcellular location is the nucleus. Functionally, component of the NC2 complex which represses RNA polymerase II transcription through binding to SPT15/TBP and thereby inhibiting the assembly of the preinitiation complex. The NC2 complex may also mediate transcriptional activation from TATA-driven promoters through association with SPT15/TBP. This chain is Negative cofactor 2 complex subunit beta (NCB2), found in Saccharomyces cerevisiae (strain ATCC 204508 / S288c) (Baker's yeast).